Reading from the N-terminus, the 308-residue chain is ATP synthase gamma chain (308 aa).

It belongs to the ATPase gamma chain family. As to quaternary structure, F-type ATPases have 2 components, CF(1) - the catalytic core - and CF(0) - the membrane proton channel. CF(1) has five subunits: alpha(3), beta(3), gamma(1), delta(1), epsilon(1). CF(0) has three main subunits: a, b and c.

It localises to the cell inner membrane. In terms of biological role, produces ATP from ADP in the presence of a proton gradient across the membrane. The gamma chain is believed to be important in regulating ATPase activity and the flow of protons through the CF(0) complex. In Salinibacter ruber (strain DSM 13855 / M31), this protein is ATP synthase gamma chain.